Reading from the N-terminus, the 567-residue chain is NAC domain-containing protein 78 (567 aa).

Residues 9-159 (LAPGFRFHPT…AYVLCRIFQK (151 aa)) enclose the NAC domain. The DNA-binding element occupies 108 to 165 (VGMKKTLVYHKGRAPRGERTNWVMHEYRLSDEDLKKAGVPQEAYVLCRIFQKSGTGPK). The segment at 393-436 (NQEALDQKPAPKELEKEVAGGKEAVEEKESGEGSSSKQDTDFKD) is disordered. Over residues 397–423 (LDQKPAPKELEKEVAGGKEAVEEKESG) the composition is skewed to basic and acidic residues. The chain crosses the membrane as a helical span at residues 544 to 564 (LVFMCLWVLLLSVSFKIVTMV).

In terms of tissue distribution, expressed in root meristem. Expressed in roots, rosette leaves, cauline leaves, shoot apex, stems and flowers.

It is found in the membrane. Its subcellular location is the nucleus. Functionally, transcriptional activator activated by proteolytic cleavage through regulated intramembrane proteolysis (RIP). Transcripition activator associated with the induction of genes related to flavonoid biosynthesis and required for the accumulation of anthocyanins in response to high light stress. Plays a role in the regulation of 20S and 26S proteasomes in response to high light stress. In Arabidopsis thaliana (Mouse-ear cress), this protein is NAC domain-containing protein 78 (NAC078).